The chain runs to 274 residues: MAIKIYRPTSPGRRHHSVSSFEEITKSRPEKALLVSVKNDSGRNNQGRVTVRHRGGGSKTQIRVIDFKRNKLDVPGRIAAIEYDPNRTARIALVFYTDGEKRYILAPSDLKIGDVIMAGENAEPKSGNALPLSAIPTGTFIHNIELIKGRGGIMVRSAGAAAQLMAKEGDYALVRLPSGEMRKVRSDCSATVGQIGNIEHGTLEIGKAGRNRHLGWRPTVRGSAMSPNNHPHGGGECRSPIGMTGPKTPWGKPALGYRTRKAKYSDKLIVKRRG.

Disordered stretches follow at residues M1–E23 and G222–G242.

This sequence belongs to the universal ribosomal protein uL2 family. As to quaternary structure, part of the 50S ribosomal subunit. Forms a bridge to the 30S subunit in the 70S ribosome.

Its function is as follows. One of the primary rRNA binding proteins. Required for association of the 30S and 50S subunits to form the 70S ribosome, for tRNA binding and peptide bond formation. It has been suggested to have peptidyltransferase activity; this is somewhat controversial. Makes several contacts with the 16S rRNA in the 70S ribosome. This Dehalococcoides mccartyi (strain ATCC BAA-2266 / KCTC 15142 / 195) (Dehalococcoides ethenogenes (strain 195)) protein is Large ribosomal subunit protein uL2.